The primary structure comprises 1680 residues: SWI/SNF chromatin-remodeling complex subunit snf22 (1680 aa).

Disordered regions lie at residues 61-135 (QQMR…SQAS), 203-258 (NNSF…HSFS), 274-300 (RRGSIPVNPSTFSASSPPSGSMLASPY), and 367-427 (YVYR…VPPT). A compositionally biased stretch (polar residues) spans 62-91 (QMRNQSSEFPDAENTNLRKQQDTLPTTGFN). Low complexity-rich tracts occupy residues 118–127 (GNGNVGLNNP) and 222–233 (SSLPHSFASPSS). Residues 234-245 (TFEQPHTVQSRA) are compositionally biased toward polar residues. 3 stretches are compositionally biased toward low complexity: residues 247 to 258 (SVDTTSSSHSFS), 282 to 299 (PSTFSASSPPSGSMLASP), and 374 to 392 (PPSATSFQPSSSRSPSVDP). Residues 406–419 (PSPSASALKTQSHV) show a composition bias toward polar residues. The region spanning 429–465 (KLNHAQLAMLKSQIVAYNCLNSPNGQVPPAVQQAIFG) is the QLQ domain. Residues 477-489 (SMPFQQNVPQMSS) show a composition bias toward polar residues. A disordered region spans residues 477–499 (SMPFQQNVPQMSSVKKDTPTRDA). The span at 490-499 (VKKDTPTRDA) shows a compositional bias: basic and acidic residues. Positions 704–776 (QKTEHAMRQK…ARQRLQALRA (73 aa)) constitute an HSA domain. Residues 817 to 832 (SNIHSGNTSGKGSNSA) are compositionally biased toward polar residues. The segment at 817–836 (SNIHSGNTSGKGSNSAELEA) is disordered. One can recognise a Helicase ATP-binding domain in the interval 881-1046 (LSLYNNNLNG…WALLNFVLPK (166 aa)). An ATP-binding site is contributed by 894 to 901 (DEMGLGKT). The DEGH box motif lies at 996–999 (DEGH). The 164-residue stretch at 1191–1354 (LLDRILPKLF…STPEEREAFL (164 aa)) folds into the Helicase C-terminal domain. Positions 1466–1511 (TVDDPSSTLMPRKRGRPRKKTNSGSSLSTPLSQESSLARSGRKNTP) are disordered. The segment covering 1476-1486 (PRKRGRPRKKT) has biased composition (basic residues). A compositionally biased stretch (low complexity) spans 1488–1502 (SGSSLSTPLSQESSL). In terms of domain architecture, Bromo spans 1513 to 1623 (YKQKALRRYC…KTLKEVIEDL (111 aa)).

Belongs to the SNF2/RAD54 helicase family. In terms of assembly, component of the SWI/SNF global transcription activator complex composed of at least arp9, arp42, snf5, snf22, snf30, sbf59, sol1, ssr1, ssr2, ssr3, ssr4 and tfg3.

Its subcellular location is the nucleus. Functionally, helicase. Component of the SWI/SNF complex, an ATP-dependent chromatin remodeling complex, required for the positive and negative regulation of gene expression of a large number of genes. It changes chromatin structure by altering DNA-histone contacts within a nucleosome, leading eventually to a change in nucleosome position, thus facilitating or repressing binding of gene-specific transcription factors. The protein is SWI/SNF chromatin-remodeling complex subunit snf22 (snf22) of Schizosaccharomyces pombe (strain 972 / ATCC 24843) (Fission yeast).